Reading from the N-terminus, the 209-residue chain is CASP-like protein 2A2 (209 aa).

Over 1-37 (MSKTAGVGRLGGARAADAAQQQQLAAGDAAVARAARP) the chain is Cytoplasmic. The chain crosses the membrane as a helical span at residues 38 to 58 (IETLLRAAPLVLCVAAMTLML). The Extracellular portion of the chain corresponds to 59-79 (RDQQSNEYGTVAYSDLGGFKY). Residues 80-100 (LVYANGLCAAYSLASAFYTAV) traverse the membrane as a helical segment. Over 101 to 109 (PRPATVSRS) the chain is Cytoplasmic. A helical membrane pass occupies residues 110 to 130 (WVVFLLDQVFTYLILAAGAAA). Residues 131-161 (AELLYLAYNGDKEVTWSEACGVFGSFCRQAR) lie on the Extracellular side of the membrane. Residues 162–182 (ISVAITFGAVLCFILLSLLSS) traverse the membrane as a helical segment. Residues 183-209 (YRLFSAYEAPPPSALGSKGVEIAAYPR) are Cytoplasmic-facing.

The protein belongs to the Casparian strip membrane proteins (CASP) family. Homodimer and heterodimers.

It localises to the cell membrane. This chain is CASP-like protein 2A2, found in Zea mays (Maize).